The primary structure comprises 889 residues: Alanine--tRNA ligase (889 aa).

The Zn(2+) site is built by H587, H591, C691, and H695. Disordered regions lie at residues 734–760 and 866–889; these read QQEQ…EENK and AQGG…MILG. The segment covering 872-881 has biased composition (basic and acidic residues); the sequence is DTSKKDEAIS.

It belongs to the class-II aminoacyl-tRNA synthetase family. Zn(2+) serves as cofactor.

The protein localises to the cytoplasm. The enzyme catalyses tRNA(Ala) + L-alanine + ATP = L-alanyl-tRNA(Ala) + AMP + diphosphate. Functionally, catalyzes the attachment of alanine to tRNA(Ala) in a two-step reaction: alanine is first activated by ATP to form Ala-AMP and then transferred to the acceptor end of tRNA(Ala). Also edits incorrectly charged Ser-tRNA(Ala) and Gly-tRNA(Ala) via its editing domain. The sequence is that of Alanine--tRNA ligase from Nitrosopumilus maritimus (strain SCM1).